The chain runs to 348 residues: Sorbitol dehydrogenase (348 aa).

3 residues coordinate Zn(2+): C40, H65, and E66. Residues I179, D199, R204, 269-271 (VGI), and 293-295 (SFR) each bind NAD(+). A substrate-binding site is contributed by R295.

The protein belongs to the zinc-containing alcohol dehydrogenase family. In terms of assembly, homotetramer. Requires Zn(2+) as cofactor.

The enzyme catalyses xylitol + NAD(+) = D-xylulose + NADH + H(+). The catalysed reaction is L-iditol + NAD(+) = keto-L-sorbose + NADH + H(+). It catalyses the reaction keto-D-fructose + NADH + H(+) = D-sorbitol + NAD(+). Functionally, polyol dehydrogenase that catalyzes the reversible NAD(+)-dependent oxidation of various sugar alcohols. Is active with xylitol, L-iditol and D-sorbitol (D-glucitol) as substrates, leading to the C2-oxidized products D-xylulose, L-sorbose and D-fructose, respectively. Is a key enzyme in the polyol pathway that interconverts glucose and fructose via sorbitol, which constitutes an important alternate route for glucose metabolism. The polypeptide is Sorbitol dehydrogenase (SDH) (Bombyx mori (Silk moth)).